The chain runs to 159 residues: Probable cyclic pyranopterin monophosphate synthase (159 aa).

Substrate is bound by residues 75–77 (LCH) and 111–112 (ME). Asp-126 is a catalytic residue.

The protein belongs to the MoaC family. As to quaternary structure, homohexamer; trimer of dimers.

It carries out the reaction (8S)-3',8-cyclo-7,8-dihydroguanosine 5'-triphosphate = cyclic pyranopterin phosphate + diphosphate. The protein operates within cofactor biosynthesis; molybdopterin biosynthesis. Its function is as follows. Catalyzes the conversion of (8S)-3',8-cyclo-7,8-dihydroguanosine 5'-triphosphate to cyclic pyranopterin monophosphate (cPMP). The protein is Probable cyclic pyranopterin monophosphate synthase of Pyrococcus horikoshii (strain ATCC 700860 / DSM 12428 / JCM 9974 / NBRC 100139 / OT-3).